Consider the following 452-residue polypeptide: MSLMQFSGLLVVWLLSTLFIATLTWFEFRRVRFNFNVFFSLLFLLTFFFGFPLTSVLVFRFDVGVAPPEILLQALLSAACFYGVYYVTYKTRLRKRVVDVPRKPLFTMNRVETHLTWVILMGIALVSVAIFFMHNGFLLFRLHSYSQIFSSEVSGVALKRFFYFFIPAMLVVYFLRQDSKAWLFFLVSTVAFGLLTYMIVGGTRANIIIAFAIFLFIGIIRGWISLWMLAAAGVLGIVGMFWLALKRYGLNVSGDEAFYTFLYLTRDTFSPWENLALLLQNYHNIDFQGLAPIVRDFYVFIPTWLWPGRPSIVLNSANYFTWEVLNNHSGLAISPTLIGSLVVMGGALFIPLGAIVVGLIIKWFDWLYELGNREPNRYKAAILHSFCFGAIFNMIVLAREGLDSFVSRVVFFLVVFGASLLVAKLLFWLFDSAGLIHKRTTSLPQAQMDGKL.

11 consecutive transmembrane segments (helical) span residues 6-26 (FSGLLVVWLLSTLFIATLTWF), 37-57 (VFFSLLFLLTFFFGFPLTSVL), 63-83 (VGVAPPEILLQALLSAACFYG), 118-138 (VILMGIALVSVAIFFMHNGFL), 155-175 (GVALKRFFYFFIPAMLVVYFL), 181-201 (AWLFFLVSTVAFGLLTYMIVG), 207-227 (IIIAFAIFLFIGIIRGWISLW), 228-248 (MLAAAGVLGIVGMFWLALKRY), 341-361 (LVVMGGALFIPLGAIVVGLII), 378-398 (YKAAILHSFCFGAIFNMIVLA), and 410-430 (VFFLVVFGASLLVAKLLFWLF).

It belongs to the WzyE family. Probably part of a complex composed of WzxE, WzyE and WzzE.

The protein resides in the cell inner membrane. Its pathway is bacterial outer membrane biogenesis; enterobacterial common antigen biosynthesis. Its function is as follows. Probably involved in the polymerization of enterobacterial common antigen (ECA) trisaccharide repeat units. The polypeptide is Probable ECA polymerase (Salmonella typhi).